The sequence spans 689 residues: Glycine--tRNA ligase beta subunit (689 aa).

This sequence belongs to the class-II aminoacyl-tRNA synthetase family. As to quaternary structure, tetramer of two alpha and two beta subunits.

Its subcellular location is the cytoplasm. It carries out the reaction tRNA(Gly) + glycine + ATP = glycyl-tRNA(Gly) + AMP + diphosphate. The chain is Glycine--tRNA ligase beta subunit from Dictyoglomus turgidum (strain DSM 6724 / Z-1310).